An 850-amino-acid chain; its full sequence is MGKIQKKHGKGRLDHYYRLAKEKGYRARSSFKIIQINQKYGKFLEKSKVVIDLCAAPGSWCQVASQLCPVNSLIIGCDIVPIKPLPNVITFQSDITTDHCRQQLRQYMKTWKADTVMHDGAPNVGMAWAQDAFTQSELVLQSLKLAVEFLNKGGTFVTKVFRSKDYNNLMWVFQQFFEKVEATKPPSSRNVSAEIFVVCLKFKAPKKIDPRLLDAKYVFEEVSQGNNNNEAKVFNPEVKRRKREGYEEGEYLQHKRLSILDFITDSTPIDNLGETNEMTWTPRSIKEGEVDEEEEKEKDKEARDERGNVQYVLDDKVYSDEDALKMVSKLPQTTPELLECLKDLKVLGRKEFRAILKWRLSARDLLQIDKPEAGVEVEEEELDEDQLIDKELSELGEREKARKKRERRRRNEMKQREIQRMQMNMTTPTELGIEAAKMESLFNLKQAERTGKLSELQKGKRSHVSETGDEHVTLEEAERVDYGSDDEANGLEDELESMYTEYLENKAARTAKSVVQRKKANVETEEWFGISDKKDGDESDGEMSADDVDMATIDDGEDEDDGKTARTLNNGNMFFSNPIFDNLVNAAVAKTEAKPKALDLLEPGAKDLIELEKAKKRKYAKKNGLEYSDSEDEEDDIVMETQKQDDSDIEYVHGESDSDDEPNIDLVTDQAMTMAHQLATGQTNKHKLQDDGYNRYSFRDLDGLPQWFQDDENKHNKLNKPITKEAVEALKQKMKTLNARPIKKVLEAKGRKKMRALRRLEQMKKKSELINEDGARSEKEKADDISKLMRKLAKPQKSKKKTVTVVYAGGKNKGIAGRPRGVTGKYKMVDGTMKKEQRAIRRIKKKMGKK.

Residues G58, W60, D78, D94, and D119 each coordinate S-adenosyl-L-methionine. Catalysis depends on K159, which acts as the Proton acceptor. Residues 273 to 282 are compositionally biased toward polar residues; sequence GETNEMTWTP. Disordered regions lie at residues 273-305, 388-414, 529-569, and 620-646; these read GETNEMTWTPRSIKEGEVDEEEEKEKDKEARDE, IDKELSELGEREKARKKRERRRRNEMK, GISD…RTLN, and AKKNGLEYSDSEDEEDDIVMETQKQDD. A compositionally biased stretch (basic and acidic residues) spans 388–400; sequence IDKELSELGEREK. Residues 397-425 are a coiled coil; it reads EREKARKKRERRRRNEMKQREIQRMQMNM. The span at 401–411 shows a compositional bias: basic residues; sequence ARKKRERRRRN. Composition is skewed to acidic residues over residues 537 to 561 and 628 to 638; these read DESDGEMSADDVDMATIDDGEDEDD and SDSEDEEDDIV. Positions 746-773 form a coiled coil; that stretch reads LEAKGRKKMRALRRLEQMKKKSELINED. A disordered region spans residues 811–850; it reads KNKGIAGRPRGVTGKYKMVDGTMKKEQRAIRRIKKKMGKK. Basic residues predominate over residues 840–850; that stretch reads IRRIKKKMGKK.

It belongs to the class I-like SAM-binding methyltransferase superfamily. RNA methyltransferase RlmE family. SPB1 subfamily. Component of the nucleolar and nucleoplasmic pre-60S ribosomal particle.

The protein localises to the nucleus. It is found in the nucleolus. The enzyme catalyses a ribonucleotide in rRNA + S-adenosyl-L-methionine = a 2'-O-methylribonucleotide in rRNA + S-adenosyl-L-homocysteine + H(+). Functionally, required for proper assembly of pre-ribosomal particles during the biogenesis of the 60S ribosomal subunit. This is AdoMet-dependent rRNA methyltransferase SPB1 from Yarrowia lipolytica (strain CLIB 122 / E 150) (Yeast).